We begin with the raw amino-acid sequence, 598 residues long: Serine hydroxymethyltransferase 7 (598 aa).

The tract at residues 57–85 (QLLEQKAEKTTTVDEPKKDGGGGGDQKED) is disordered. Positions 61–85 (QKAEKTTTVDEPKKDGGGGGDQKED) are enriched in basic and acidic residues. At K370 the chain carries N6-(pyridoxal phosphate)lysine.

The protein belongs to the SHMT family. Homotetramer. It depends on pyridoxal 5'-phosphate as a cofactor.

It is found in the cytoplasm. The catalysed reaction is (6R)-5,10-methylene-5,6,7,8-tetrahydrofolate + glycine + H2O = (6S)-5,6,7,8-tetrahydrofolate + L-serine. It functions in the pathway one-carbon metabolism; tetrahydrofolate interconversion. Catalyzes the interconversion of serine and glycine. This is Serine hydroxymethyltransferase 7 (SHM7) from Arabidopsis thaliana (Mouse-ear cress).